The chain runs to 205 residues: Holliday junction branch migration complex subunit RuvA (205 aa).

Residues 1–64 are domain I; it reads MIGKLKGTID…EDQLRLFGFL (64 aa). A domain II region spans residues 65-143; it reads SALEREWFRL…AFAGEMSASI (79 aa). Positions 144–153 are flexible linker; the sequence is GLKQELGEGV. Residues 153 to 205 are domain III; that stretch reads VAAAPVSDAVSALTNLGYSRDQAANAVAAALKNGGEGGDSAKLIRLGLKELAR.

It belongs to the RuvA family. As to quaternary structure, homotetramer. Forms an RuvA(8)-RuvB(12)-Holliday junction (HJ) complex. HJ DNA is sandwiched between 2 RuvA tetramers; dsDNA enters through RuvA and exits via RuvB. An RuvB hexamer assembles on each DNA strand where it exits the tetramer. Each RuvB hexamer is contacted by two RuvA subunits (via domain III) on 2 adjacent RuvB subunits; this complex drives branch migration. In the full resolvosome a probable DNA-RuvA(4)-RuvB(12)-RuvC(2) complex forms which resolves the HJ.

It localises to the cytoplasm. Functionally, the RuvA-RuvB-RuvC complex processes Holliday junction (HJ) DNA during genetic recombination and DNA repair, while the RuvA-RuvB complex plays an important role in the rescue of blocked DNA replication forks via replication fork reversal (RFR). RuvA specifically binds to HJ cruciform DNA, conferring on it an open structure. The RuvB hexamer acts as an ATP-dependent pump, pulling dsDNA into and through the RuvAB complex. HJ branch migration allows RuvC to scan DNA until it finds its consensus sequence, where it cleaves and resolves the cruciform DNA. In Sinorhizobium fredii (strain NBRC 101917 / NGR234), this protein is Holliday junction branch migration complex subunit RuvA.